The sequence spans 223 residues: uncharacterized protein (223 aa).

The tract at residues 40 to 70 (GSKRLKPAKFGTEGKERVEQRTERQRTGSSK) is disordered. Basic and acidic residues predominate over residues 51 to 70 (TEGKERVEQRTERQRTGSSK).

This is an uncharacterized protein from Homo sapiens (Human).